Reading from the N-terminus, the 591-residue chain is Oxaloacetate decarboxylase alpha chain (591 aa).

One can recognise a Pyruvate carboxyltransferase domain in the interval 3–263 (IAITDVVLRD…DTGLDILKLE (261 aa)). The region spanning 518-591 (PAGAGTPVTA…SVGDTLMTLA (74 aa)) is the Biotinyl-binding domain. Position 557 is an N6-biotinyllysine (Lys557).

In terms of assembly, composed of three chains (alpha, beta, and gamma). The cofactor is biotin.

The enzyme catalyses oxaloacetate + 2 Na(+)(in) + H(+) = pyruvate + 2 Na(+)(out) + CO2. Functionally, catalyzes the decarboxylation of oxaloacetate coupled to Na(+) translocation. The sequence is that of Oxaloacetate decarboxylase alpha chain (oadA1) from Salmonella typhimurium (strain LT2 / SGSC1412 / ATCC 700720).